The sequence spans 263 residues: MPEGPEIRRAADNLEAAIKGKPLTDVWFAFAQLKPYESQLTGQLVTRIETRGKALLTHFSNGLTLYSHNQLYGVWRVIDTGEIPQTTRILRVRLQTADKTILLYSASDIEMLTAEQLTTHPFLQRVGPDVLDARLTPEEVKARLLSPRFRNRQFSGLLLDQAFLAGLGNYLRVEILWQVGLTGQHKAKDLNEAQLNALSHALLDIPRLSYTTRGQSDENKHHGALFRFKVFHRDGEACERCGGIIEKTTLSSRPFYWCPHCQK.

Proline 2 serves as the catalytic Schiff-base intermediate with DNA. Glutamate 3 serves as the catalytic Proton donor. Lysine 53 acts as the Proton donor; for beta-elimination activity in catalysis. Glutamine 70, arginine 125, and asparagine 169 together coordinate DNA. The FPG-type zinc-finger motif lies at 229–263 (KVFHRDGEACERCGGIIEKTTLSSRPFYWCPHCQK). Arginine 253 (proton donor; for delta-elimination activity) is an active-site residue.

Belongs to the FPG family. The cofactor is Zn(2+).

The catalysed reaction is 2'-deoxyribonucleotide-(2'-deoxyribose 5'-phosphate)-2'-deoxyribonucleotide-DNA = a 3'-end 2'-deoxyribonucleotide-(2,3-dehydro-2,3-deoxyribose 5'-phosphate)-DNA + a 5'-end 5'-phospho-2'-deoxyribonucleoside-DNA + H(+). In terms of biological role, involved in base excision repair of DNA damaged by oxidation or by mutagenic agents. Acts as a DNA glycosylase that recognizes and removes damaged bases. Has a preference for oxidized pyrimidines, such as thymine glycol, 5,6-dihydrouracil and 5,6-dihydrothymine. Has AP (apurinic/apyrimidinic) lyase activity and introduces nicks in the DNA strand. Cleaves the DNA backbone by beta-delta elimination to generate a single-strand break at the site of the removed base with both 3'- and 5'-phosphates. The protein is Endonuclease 8 of Salmonella enteritidis PT4 (strain P125109).